The sequence spans 239 residues: tRNA (guanine-N(1)-)-methyltransferase (239 aa).

Residues G109 and 128-133 (IGDYVL) contribute to the S-adenosyl-L-methionine site.

Belongs to the RNA methyltransferase TrmD family. Homodimer.

It is found in the cytoplasm. The catalysed reaction is guanosine(37) in tRNA + S-adenosyl-L-methionine = N(1)-methylguanosine(37) in tRNA + S-adenosyl-L-homocysteine + H(+). Functionally, specifically methylates guanosine-37 in various tRNAs. This chain is tRNA (guanine-N(1)-)-methyltransferase, found in Thermus thermophilus (strain ATCC BAA-163 / DSM 7039 / HB27).